A 260-amino-acid polypeptide reads, in one-letter code: UPF0246 protein BamMC406_2140 (260 aa).

Belongs to the UPF0246 family.

This chain is UPF0246 protein BamMC406_2140, found in Burkholderia ambifaria (strain MC40-6).